A 230-amino-acid polypeptide reads, in one-letter code: Modulator of macroautophagy TMEM150B-A (230 aa).

Met-1 is a topological domain (cytoplasmic). A helical membrane pass occupies residues Trp-2–Val-22. Residues Tyr-23 to Gln-50 lie on the Extracellular side of the membrane. 2 N-linked (GlcNAc...) asparagine glycosylation sites follow: Asn-29 and Asn-33. A helical membrane pass occupies residues Ser-51 to Ile-71. Residues Arg-72 to Ser-83 are Cytoplasmic-facing. The helical transmembrane segment at Val-84 to Gly-104 threads the bilayer. Residues Asn-105–His-115 are Extracellular-facing. Residues Leu-116–Leu-136 form a helical membrane-spanning segment. At Thr-137–Gly-150 the chain is on the cytoplasmic side. Residues Pro-151–Leu-171 form a helical membrane-spanning segment. The Extracellular segment spans residues Lys-172–Glu-183. The chain crosses the membrane as a helical span at residues Trp-184 to Leu-204. The Cytoplasmic portion of the chain corresponds to Asp-205–Ile-230.

The protein belongs to the DRAM/TMEM150 family.

It localises to the cell membrane. The protein localises to the endosome membrane. The protein resides in the cytoplasmic vesicle. It is found in the autophagosome membrane. Functionally, modulator of macroautophagy that causes accumulation of autophagosomes under basal conditions and enhances autophagic flux. Represses cell death and promotes long-term clonogenic survival of cells grown in the absence of glucose in a macroautophagy-independent manner. May have some role in extracellular matrix engulfment or growth factor receptor recycling, both of which can modulate cell survival. The chain is Modulator of macroautophagy TMEM150B-A from Xenopus laevis (African clawed frog).